Here is a 312-residue protein sequence, read N- to C-terminus: MKVAVLGAAGGIGQALALLLKTQLPSGSELSLYDIAPVTPGVAVDLSHIPTAVKIKGYSGEDAKPALAGADIVLISAGVARKPGMDRSDLFNVNAGIVRNLVEQIAVTCPKACIGIITNPVNTTVAIAAEVLKKAGVYDKNKLFGVTTLDIIRSNTFVAELKGKQPQDINVPVIGGHSGVTILPLLSQVPGISFSEQEVADLTKRIQNAGTEVVEAKAGGGSATLSMGQAAARFGLSLVRALQGESGVVECAYVESDGKHARFFAQPVLLGKDGVVERKDIGTLSAFEQNALSSMLDTLKQDIELGETFIKN.

NAD(+) is bound by residues 7–13 (GAAGGIG) and aspartate 34. Substrate contacts are provided by arginine 81 and arginine 87. Residues asparagine 94 and 117–119 (ITN) each bind NAD(+). Residues asparagine 119 and arginine 153 each coordinate substrate. Residue histidine 177 is the Proton acceptor of the active site. Methionine 227 is a binding site for NAD(+).

Belongs to the LDH/MDH superfamily. MDH type 1 family. As to quaternary structure, homodimer.

The catalysed reaction is (S)-malate + NAD(+) = oxaloacetate + NADH + H(+). In terms of biological role, catalyzes the reversible oxidation of malate to oxaloacetate. The polypeptide is Malate dehydrogenase (Pectobacterium carotovorum subsp. carotovorum (strain PC1)).